Here is a 369-residue protein sequence, read N- to C-terminus: Phospho-N-acetylmuramoyl-pentapeptide-transferase (369 aa).

10 consecutive transmembrane segments (helical) span residues 30–50 (AAAITSLLITILAGPKLIGYL), 73–93 (LPTMGGTLIIFSVVVSGLLWA), 99–119 (YVWLILLSILWMGTIGFIDDY), 140–160 (VSLGLFIGFYTRFDPAFSVLL), 171–191 (LMIDYGWWYIPVVVFIITAVS), 202–222 (GLAAGTSGIVVFGLGGFAYLT), 239–259 (GGEVAVVSMAIVMACVGFLWF), 266–286 (IFMGDTGSLALGSAIAVIALL), 291–311 (LLLPVLAGTFLLETLSVSLQV), and 346–366 (KIVIRFWIITLLFFLASLMTL).

It belongs to the glycosyltransferase 4 family. MraY subfamily. It depends on Mg(2+) as a cofactor.

The protein localises to the cell inner membrane. It carries out the reaction UDP-N-acetyl-alpha-D-muramoyl-L-alanyl-gamma-D-glutamyl-meso-2,6-diaminopimeloyl-D-alanyl-D-alanine + di-trans,octa-cis-undecaprenyl phosphate = di-trans,octa-cis-undecaprenyl diphospho-N-acetyl-alpha-D-muramoyl-L-alanyl-D-glutamyl-meso-2,6-diaminopimeloyl-D-alanyl-D-alanine + UMP. It functions in the pathway cell wall biogenesis; peptidoglycan biosynthesis. In terms of biological role, catalyzes the initial step of the lipid cycle reactions in the biosynthesis of the cell wall peptidoglycan: transfers peptidoglycan precursor phospho-MurNAc-pentapeptide from UDP-MurNAc-pentapeptide onto the lipid carrier undecaprenyl phosphate, yielding undecaprenyl-pyrophosphoryl-MurNAc-pentapeptide, known as lipid I. The chain is Phospho-N-acetylmuramoyl-pentapeptide-transferase from Chlorobium phaeobacteroides (strain BS1).